A 383-amino-acid polypeptide reads, in one-letter code: MAKKQKNLDDITKKFGDERQKALDNALKNIEKDFGKGAIMRLGERAEQKVQVMSSGSLALDIALGAGGYPKGRIIEIYGPESSGKTTVALHAVAQAQKEGGIAAFIDAEHALDPSYAAALGVNIDELLLSQPDSGEQGLEIAGKLIDSGAVDLVVIDSVAALVPRAEIDGDIGDSHVGLQARMMSQAMRKLSASINKTKTIAIFINQLREKVGVMFGNPETTPGGRALKFYASVRLDVRGNTQIKGTGDAKDTNVGKETKIKVVKNKVAPPFKEAFVEIMYGEGISKTGELIKIATDLNIIKKAGAWYSYNDEKIGQGSENAKKYLADHPEVFDEIDRQVRVRFGLIEDDQEGEATAAETTGKITENIEEVTLELDDAIEIEE.

79 to 86 (GPESSGKT) is a binding site for ATP.

This sequence belongs to the RecA family.

The protein resides in the cytoplasm. Functionally, can catalyze the hydrolysis of ATP in the presence of single-stranded DNA, the ATP-dependent uptake of single-stranded DNA by duplex DNA, and the ATP-dependent hybridization of homologous single-stranded DNAs. It interacts with LexA causing its activation and leading to its autocatalytic cleavage. This chain is Protein RecA, found in Streptococcus gordonii (strain Challis / ATCC 35105 / BCRC 15272 / CH1 / DL1 / V288).